The following is a 143-amino-acid chain: Large-conductance mechanosensitive channel (143 aa).

3 consecutive transmembrane segments (helical) span residues 10 to 30, 40 to 60, and 86 to 106; these read FAVK…GAFG, VIMP…LFLV, and GSFI…FMMV.

Belongs to the MscL family. In terms of assembly, homopentamer.

Its subcellular location is the cell inner membrane. Channel that opens in response to stretch forces in the membrane lipid bilayer. May participate in the regulation of osmotic pressure changes within the cell. The sequence is that of Large-conductance mechanosensitive channel from Paracidovorax citrulli (strain AAC00-1) (Acidovorax citrulli).